The primary structure comprises 419 residues: MTGLPDQLRRPVRGMRDWMPQQLYALRRMEEVLSSVAEQYGYRRVETPVVEHFEVLAKKAGQEVINEIYYFRDKAGRELGLRFDMTVPIARVLSYNLDLPRPVRWYYFSKVFRYDEPQHGRYREFFQFGVELIGSASPRADAEVVQLLAASLEAAGASKYVIRINDRRAVDKLLESLGALSHRDAVYRALDKKLKLPREEVIGIMTSGGLPRDAAEKIYDTASEMSLDEAVEVLRRLDGRLGEAYAKFVKYLEAAVPLERFKFDMSIVRGLDYYTGVVFEAFVGDYWLAVGGGGRYDDLLELYSGVKIPALGFAIGVERLMEAVGLQSVEKPLDYYIYIFDDDAYKHAVALANRLRKQGHSVVVELGEKNLKDVFEYVLKIGTRYLVLIGRKELEKGVVKIRDLQKRGEVEVPLSALLS.

The protein belongs to the class-II aminoacyl-tRNA synthetase family.

The protein resides in the cytoplasm. It carries out the reaction tRNA(His) + L-histidine + ATP = L-histidyl-tRNA(His) + AMP + diphosphate + H(+). In Pyrobaculum arsenaticum (strain DSM 13514 / JCM 11321 / PZ6), this protein is Histidine--tRNA ligase.